The chain runs to 97 residues: Exodeoxyribonuclease 7 small subunit (97 aa).

A disordered region spans residues 1 to 22 (MAKTASPGDTAAGNGTEPLPDK).

The protein belongs to the XseB family. As to quaternary structure, heterooligomer composed of large and small subunits.

It is found in the cytoplasm. It catalyses the reaction Exonucleolytic cleavage in either 5'- to 3'- or 3'- to 5'-direction to yield nucleoside 5'-phosphates.. In terms of biological role, bidirectionally degrades single-stranded DNA into large acid-insoluble oligonucleotides, which are then degraded further into small acid-soluble oligonucleotides. This Burkholderia vietnamiensis (strain G4 / LMG 22486) (Burkholderia cepacia (strain R1808)) protein is Exodeoxyribonuclease 7 small subunit.